The primary structure comprises 336 residues: MSKPVKAAVFGTGSWGTAFGTVLADAGCEVTLWGRRAALADAVNSTRTNPDYLPGVELPENLRATTDAAEAARDADFTVLAVPSQTLRAGLADWTPLLAPGTVLVSLMKGVELGSAMRMSEVIGDVAKVGAERIAVVTGPNLAREIAARMPAAAVVACPDETVAQRLQAACHTPYFRPYTNTDVVGCELGGAVKNVIGLAVGIADGMGLGDNAKGSLITRGLAETTRLGVALGADPLTFSGLAGLGDLVATCSSPLSRNHTFGTNLGKGMTLEETNAVTKQTAEGVKSCESVLDLARRHGVDMPITETVVAIVHEGKSPVVAVKELMSRSAKPERR.

Ser14, Trp15, Arg35, Arg36, and Lys109 together coordinate NADPH. Residues Lys109 and Gly139 each contribute to the sn-glycerol 3-phosphate site. Ala143 contributes to the NADPH binding site. Lys194, Asp247, Ser257, Arg258, and Asn259 together coordinate sn-glycerol 3-phosphate. The active-site Proton acceptor is Lys194. An NADPH-binding site is contributed by Arg258. Glu284 lines the NADPH pocket.

Belongs to the NAD-dependent glycerol-3-phosphate dehydrogenase family.

The protein resides in the cytoplasm. The catalysed reaction is sn-glycerol 3-phosphate + NAD(+) = dihydroxyacetone phosphate + NADH + H(+). The enzyme catalyses sn-glycerol 3-phosphate + NADP(+) = dihydroxyacetone phosphate + NADPH + H(+). It participates in membrane lipid metabolism; glycerophospholipid metabolism. In terms of biological role, catalyzes the reduction of the glycolytic intermediate dihydroxyacetone phosphate (DHAP) to sn-glycerol 3-phosphate (G3P), the key precursor for phospholipid synthesis. The chain is Glycerol-3-phosphate dehydrogenase [NAD(P)+] from Streptomyces coelicolor (strain ATCC BAA-471 / A3(2) / M145).